Here is a 1358-residue protein sequence, read N- to C-terminus: Xanthine dehydrogenase (1358 aa).

The 90-residue stretch at asparagine 18–leucine 107 folds into the 2Fe-2S ferredoxin-type domain. Cysteine 56, cysteine 61, cysteine 64, cysteine 89, cysteine 129, cysteine 132, cysteine 164, and cysteine 166 together coordinate [2Fe-2S] cluster. Residues phenylalanine 253–proline 447 enclose the FAD-binding PCMH-type domain. FAD contacts are provided by residues isoleucine 281–isoleucine 288, phenylalanine 366, serine 376–asparagine 380, aspartate 389, leucine 437, and lysine 455. Residues glutamine 805 and phenylalanine 836 each contribute to the Mo-molybdopterin site. The substrate site is built by glutamate 840 and arginine 918. Arginine 950 is a Mo-molybdopterin binding site. Tyrosine 952 and threonine 1048 together coordinate substrate. Mo-molybdopterin is bound at residue alanine 1117. Glutamate 1302 serves as the catalytic Proton acceptor.

The protein belongs to the xanthine dehydrogenase family. As to quaternary structure, homodimer. FAD is required as a cofactor. It depends on Mo-molybdopterin as a cofactor. Requires [2Fe-2S] cluster as cofactor.

The protein resides in the peroxisome. It catalyses the reaction xanthine + NAD(+) + H2O = urate + NADH + H(+). It carries out the reaction hypoxanthine + NAD(+) + H2O = xanthine + NADH + H(+). Its function is as follows. Key enzyme in purine degradation. Catalyzes the oxidation of hypoxanthine to xanthine. Catalyzes the oxidation of xanthine to uric acid. This is Xanthine dehydrogenase (xdh) from Dictyostelium discoideum (Social amoeba).